The following is an 876-amino-acid chain: Vacuolar protein sorting-associated protein 39 homolog (876 aa).

Residues 14–310 (GVQIESIAAY…KFLVHADKGT (297 aa)) enclose the CNH domain. The stretch at 578–741 (ELIEVESLPR…ILIPPTQPLY (164 aa)) is one CHCR repeat.

The protein belongs to the VAM6/VPS39 family. In terms of assembly, part of the homotypic fusion and vacuole protein sorting (HOPS) complex, composed of Vps16A, car/Vps33A, dor/Vps18, Vps39, Vps11 and lt/Vps41. Interacts with Rab2 (GTP-bound form); the interaction is probably direct.

It is found in the cytoplasm. It localises to the lysosome membrane. Its subcellular location is the late endosome membrane. The protein localises to the late endosome. The protein resides in the lysosome. In terms of biological role, part of the homotypic fusion and vacuole protein sorting (HOPS) tethering complex involved in endo-lysosomal vesicle trafficking and lysosome biogenesis. The HOPS complex facilitates docking and fusion of lysosomes with late endosomes and several other types of vesicles. The HOPS complex is also involved in autophagy and crinophagy (the elimination of unused secretory granules through their fusion with lysosomes). The HOPS complex mediates autophagocitic flux, probably by binding autophagosome-associated Syx17/syntaxin 17, promoting assembly of the trans-SNARE complex and instigating autophagosome-lysosome fusion. Independent of Syx17/syntaxin 17, HOPS is involved in biosynthetic transport to lysosomes and lysosome-related organelles such as eye-pigment granules. Required for autophagocytosis-dependent remodeling of myofibrils and transverse-tubules (T-tubules) during metamorphosis. The polypeptide is Vacuolar protein sorting-associated protein 39 homolog (Drosophila melanogaster (Fruit fly)).